The chain runs to 283 residues: Pantothenate synthetase (283 aa).

30–37 (MGALHEGH) provides a ligand contact to ATP. The active-site Proton donor is H37. Q61 lines the (R)-pantoate pocket. Q61 contacts beta-alanine. Residue 147–150 (GMKD) participates in ATP binding. Q153 contributes to the (R)-pantoate binding site. ATP-binding positions include V176 and 184–187 (LSSR).

The protein belongs to the pantothenate synthetase family. Homodimer.

The protein resides in the cytoplasm. The enzyme catalyses (R)-pantoate + beta-alanine + ATP = (R)-pantothenate + AMP + diphosphate + H(+). Its pathway is cofactor biosynthesis; (R)-pantothenate biosynthesis; (R)-pantothenate from (R)-pantoate and beta-alanine: step 1/1. Catalyzes the condensation of pantoate with beta-alanine in an ATP-dependent reaction via a pantoyl-adenylate intermediate. The chain is Pantothenate synthetase from Endomicrobium trichonymphae.